Reading from the N-terminus, the 345-residue chain is N-acetyl-gamma-glutamyl-phosphate reductase (345 aa).

Residue Cys149 is part of the active site.

It belongs to the NAGSA dehydrogenase family. Type 1 subfamily.

The protein resides in the cytoplasm. The enzyme catalyses N-acetyl-L-glutamate 5-semialdehyde + phosphate + NADP(+) = N-acetyl-L-glutamyl 5-phosphate + NADPH + H(+). It functions in the pathway amino-acid biosynthesis; L-arginine biosynthesis; N(2)-acetyl-L-ornithine from L-glutamate: step 3/4. In terms of biological role, catalyzes the NADPH-dependent reduction of N-acetyl-5-glutamyl phosphate to yield N-acetyl-L-glutamate 5-semialdehyde. The polypeptide is N-acetyl-gamma-glutamyl-phosphate reductase (Bacillus cereus (strain B4264)).